The chain runs to 354 residues: Histidinol-phosphate aminotransferase 1 (354 aa).

Position 209 is an N6-(pyridoxal phosphate)lysine (lysine 209).

It belongs to the class-II pyridoxal-phosphate-dependent aminotransferase family. Histidinol-phosphate aminotransferase subfamily. As to quaternary structure, homodimer. It depends on pyridoxal 5'-phosphate as a cofactor.

It catalyses the reaction L-histidinol phosphate + 2-oxoglutarate = 3-(imidazol-4-yl)-2-oxopropyl phosphate + L-glutamate. Its pathway is amino-acid biosynthesis; L-histidine biosynthesis; L-histidine from 5-phospho-alpha-D-ribose 1-diphosphate: step 7/9. In Oceanobacillus iheyensis (strain DSM 14371 / CIP 107618 / JCM 11309 / KCTC 3954 / HTE831), this protein is Histidinol-phosphate aminotransferase 1 (hisC1).